The sequence spans 386 residues: O-phospho-L-seryl-tRNA:Cys-tRNA synthase (386 aa).

Pyridoxal 5'-phosphate is bound by residues 89–90, asparagine 196, and 219–221; these read AR and SGH. Lysine 222 bears the N6-(pyridoxal phosphate)lysine mark.

This sequence belongs to the SepCysS family. Homodimer. Interacts with SepRS. It depends on pyridoxal 5'-phosphate as a cofactor.

The enzyme catalyses O-phospho-L-seryl-tRNA(Cys) + hydrogen sulfide + H(+) = L-cysteinyl-tRNA(Cys) + phosphate. Its function is as follows. Converts O-phospho-L-seryl-tRNA(Cys) (Sep-tRNA(Cys)) to L-cysteinyl-tRNA(Cys) (Cys-tRNA(Cys)). The protein is O-phospho-L-seryl-tRNA:Cys-tRNA synthase of Methanosarcina acetivorans (strain ATCC 35395 / DSM 2834 / JCM 12185 / C2A).